Here is a 392-residue protein sequence, read N- to C-terminus: Fasciculation and elongation protein zeta-1 (392 aa).

Residues methionine 1 to histidine 37 are disordered. Residue serine 58 is modified to Phosphoserine. The interval methionine 175–serine 198 is disordered. Positions aspartate 180–glycine 194 are enriched in acidic residues. Residues serine 230 to serine 298 adopt a coiled-coil conformation. Residues serine 298 and serine 316 each carry the phosphoserine modification.

The protein belongs to the zygin family. As to quaternary structure, homodimer; disulfide-linked. May form heterodimers with FEZ2. Interacts with the NH2-terminal variable region (V1) of PKC zeta and weakly with that of PKC epsilon. Interacts with UBE4B. Interacts with SAP30L. Interacts with SCOC and ULK1; SCOC interferes with ULK1-binding to FEZ1. Directly interacts with SCOC and UVRAG. Stabilizes the interaction between SCOC and UVRAG during amino acid starvation. In terms of processing, phosphorylated by protein kinase C zeta; which enhances interaction with UBE4B and polyubiquitination. Post-translationally, polyubiquitinated in a UBE4B-dependent manner; which does not lead to proteasomal degradation and may be important for neurogenic activity. Polyubiquitin linkage seems to be mainly through Lys-26. In terms of tissue distribution, mainly expressed in brain.

The protein localises to the cytoplasm. The protein resides in the cytoskeleton. It localises to the microtubule organizing center. Its subcellular location is the centrosome. It is found in the cell membrane. Its function is as follows. May be involved in axonal outgrowth as component of the network of molecules that regulate cellular morphology and axon guidance machinery. Able to restore partial locomotion and axonal fasciculation to C.elegans unc-76 mutants in germline transformation experiments. May participate in the transport of mitochondria and other cargos along microtubules. In Homo sapiens (Human), this protein is Fasciculation and elongation protein zeta-1 (FEZ1).